The sequence spans 122 residues: Ribonuclease P protein component (122 aa).

This sequence belongs to the RnpA family. As to quaternary structure, consists of a catalytic RNA component (M1 or rnpB) and a protein subunit.

The catalysed reaction is Endonucleolytic cleavage of RNA, removing 5'-extranucleotides from tRNA precursor.. Functionally, RNaseP catalyzes the removal of the 5'-leader sequence from pre-tRNA to produce the mature 5'-terminus. It can also cleave other RNA substrates such as 4.5S RNA. The protein component plays an auxiliary but essential role in vivo by binding to the 5'-leader sequence and broadening the substrate specificity of the ribozyme. In Synechococcus elongatus (strain ATCC 33912 / PCC 7942 / FACHB-805) (Anacystis nidulans R2), this protein is Ribonuclease P protein component.